A 305-amino-acid chain; its full sequence is MDSSAKGSKKDAPDGPPKDSKLPVSEALLDYHREIKENAVERFMFHIKKLREKNQKYQERNRRLKEEQNWHIKNLIKELKEKNLDEAPIVTREEVEEAMKEKWEFERQQEASLKEMRIQINEAEKLFLEKLSEKEYWEEYKNVGSAQHAQLIVSLQNDIDTVKENAEKMSEQYKVTLEDEKKRISRETMIQLKQRKEWATQHAVRFIDKNNYREIWENDWLKKEGDTASFGNVLSLLDFLPPDLHTAEPCVSSGQSRGSLRILAPFALQLWSKLSGLLPTLVTPDPVCIIWSFGPGQTNSMAICP.

Residues 1-25 (MDSSAKGSKKDAPDGPPKDSKLPVS) are disordered. Positions 8 to 21 (SKKDAPDGPPKDSK) are enriched in basic and acidic residues. Positions 37 to 186 (ENAVERFMFH…LEDEKKRISR (150 aa)) form a coiled coil.

The sequence is that of Coiled-coil domain-containing protein 83 (Ccdc83) from Mus musculus (Mouse).